The chain runs to 335 residues: Pregnancy-specific beta-1-glycoprotein 2 (335 aa).

The first 34 residues, 1 to 34, serve as a signal peptide directing secretion; the sequence is MGPLSAPPCTEHIKWKGLLVTASLLNFWNLPTTA. The Ig-like V-type domain maps to 35–144; the sequence is QVTIEAQPPK…TGYFTFTLYL (110 aa). 4 N-linked (GlcNAc...) asparagine glycosylation sites follow: Asn-61, Asn-104, Asn-111, and Asn-199. Ig-like C2-type domains lie at 147 to 234 and 239 to 317; these read PKPS…VTLN and PDLP…TSLT. Intrachain disulfides connect Cys-169–Cys-217 and Cys-261–Cys-301.

It belongs to the immunoglobulin superfamily. CEA family.

The protein resides in the secreted. This chain is Pregnancy-specific beta-1-glycoprotein 2 (PSG2), found in Homo sapiens (Human).